Here is a 399-residue protein sequence, read N- to C-terminus: MSGNRGVVYLGSGKVEVQKIDYPKMQDPRGKKIEHGVILKVVSTNICGSDQHMVRGRTTAQVGLVLGHEITGEVIEKGRDVENLQIGDLVSVPFNVACGRCRSCKEMHTGVCLTVNPARAGGAYGYVDMGDWTGGQAEYLLVPYADFNLLKLPDRDKAMEKIRDLTCLSDILPTGYHGAVTAGVGPGSTVYVAGAGPVGLAAAASARLLGAAVVIVGDLNPARLAHAKAQGFEIADLSLDTPLHEQIAALLGEPEVDCAVDAVGFEARGHGHEGAKHEAPATVLNSLMQVTRVAGKIGIPGLYVTEDPGAVDAAAKIGSLSIRFGLGWAKSHSFHTGQTPVMKYNRALMQAIMWDRINIAEVVGVQVISLDDAPRGYGEFDAGVPKKFVIDPHKTFSAA.

C47 contacts Zn(2+). 3 residues coordinate NAD(+): G48, S49, and H52. Residues H68, C98, C101, C104, C112, and D170 each coordinate Zn(2+). NAD(+) is bound by residues V198, D218, R223, V263, R268, H270, P300, L302, G337, and T339.

It belongs to the zinc-containing alcohol dehydrogenase family. Homotetramer. Requires Zn(2+) as cofactor.

The enzyme catalyses formaldehyde + NAD(+) + H2O = formate + NADH + 2 H(+). It catalyses the reaction acetaldehyde + NAD(+) + H2O = acetate + NADH + 2 H(+). The catalysed reaction is 2 formaldehyde + H2O = methanol + formate + H(+). With respect to regulation, inactivated by bipyridine and p-chloromercuribenzoate. Its function is as follows. Dehydrogenase that catalyzes the NAD(+)-dependent oxidation of formaldehyde and acetaldehyde, and, to a lesser extent, long-chain alcohols, but is inactive against propionaldehyde, butyraldehyde, methanol and ethanol. Can also catalyze the dismutation of a wide range of aldehydes such as formaldehyde. The polypeptide is Glutathione-independent formaldehyde dehydrogenase (Pseudomonas putida (Arthrobacter siderocapsulatus)).